Here is a 644-residue protein sequence, read N- to C-terminus: ATP-dependent zinc metalloprotease FtsH (644 aa).

The Cytoplasmic segment spans residues 1 to 13 (MANNDNKHRRSMS). A helical transmembrane segment spans residues 14-34 (MLLYIAVAIFVYLLLSNTLLP). Topologically, residues 35–117 (GLLRQQIQTV…SIPDNSANML (83 aa)) are extracellular. The chain crosses the membrane as a helical span at residues 118–138 (MYALIQYGIPLIIFLGIGFFI). Residues 139–644 (NRSLKRAMGD…DEGSSTPSEE (506 aa)) are Cytoplasmic-facing. 224–231 (GPPGTGKT) is an ATP binding site. His445 contributes to the Zn(2+) binding site. The active site involves Glu446. Residues His449 and Asp522 each contribute to the Zn(2+) site.

The protein in the central section; belongs to the AAA ATPase family. It in the C-terminal section; belongs to the peptidase M41 family. In terms of assembly, homohexamer. It depends on Zn(2+) as a cofactor.

It localises to the cell membrane. In terms of biological role, acts as a processive, ATP-dependent zinc metallopeptidase for both cytoplasmic and membrane proteins. Plays a role in the quality control of integral membrane proteins. In Lancefieldella parvula (strain ATCC 33793 / DSM 20469 / CCUG 32760 / JCM 10300 / KCTC 3663 / VPI 0546 / 1246) (Atopobium parvulum), this protein is ATP-dependent zinc metalloprotease FtsH.